The following is a 256-amino-acid chain: 5'-nucleotidase SurE (256 aa).

Residues Asp-8, Asp-9, Ser-39, and Asn-95 each coordinate a divalent metal cation.

The protein belongs to the SurE nucleotidase family. Requires a divalent metal cation as cofactor.

It localises to the cytoplasm. The catalysed reaction is a ribonucleoside 5'-phosphate + H2O = a ribonucleoside + phosphate. Functionally, nucleotidase that shows phosphatase activity on nucleoside 5'-monophosphates. This is 5'-nucleotidase SurE from Methanosphaera stadtmanae (strain ATCC 43021 / DSM 3091 / JCM 11832 / MCB-3).